Reading from the N-terminus, the 77-residue chain is Acyl carrier protein homolog (77 aa).

The region spanning 1-76 (MSINIKDLIM…DLINAFEDVL (76 aa)) is the Carrier domain. O-(pantetheine 4'-phosphoryl)serine is present on Ser36.

In terms of processing, 4'-phosphopantetheine is transferred from CoA to a specific serine of the apo-ACP-like protein.

Its pathway is lipid metabolism; fatty acid biosynthesis. Its function is as follows. Carrier of the growing fatty acid chain in fatty acid biosynthesis. The chain is Acyl carrier protein homolog from Ureaplasma parvum serovar 3 (strain ATCC 700970).